A 504-amino-acid chain; its full sequence is Lysine--tRNA ligase (504 aa).

Mg(2+)-binding residues include glutamate 404 and glutamate 411.

This sequence belongs to the class-II aminoacyl-tRNA synthetase family. Homodimer. Requires Mg(2+) as cofactor.

It localises to the cytoplasm. The enzyme catalyses tRNA(Lys) + L-lysine + ATP = L-lysyl-tRNA(Lys) + AMP + diphosphate. This chain is Lysine--tRNA ligase, found in Aliarcobacter butzleri (strain RM4018) (Arcobacter butzleri).